An 89-amino-acid chain; its full sequence is Large ribosomal subunit protein bL27 (89 aa).

Positions 1–21 (MAHKKGASSSRNGRDSNAQRL) are disordered. A compositionally biased stretch (polar residues) spans 7 to 19 (ASSSRNGRDSNAQ).

It belongs to the bacterial ribosomal protein bL27 family.

This is Large ribosomal subunit protein bL27 from Frankia alni (strain DSM 45986 / CECT 9034 / ACN14a).